A 1640-amino-acid polypeptide reads, in one-letter code: Basal body protein 10 (1640 aa).

The interval 11 to 64 (VLRRKLEALGYSDPLEPASLQLVQKLVEDLVHTTDSYTAVKQQCAKQAQEIAAF) is homodimerization. Positions 93-148 (AERHEREAREHYTAVKRLEDTIAELSYWKHAAAEKLASADKENAGLRKRCEELAKL) form a coiled coil. Residues 154–185 (SGAATPQSVAPKISSRSPIRVAPPPSPPRPRQ) are disordered. The segment covering 174-183 (VAPPPSPPRP) has biased composition (pro residues). 10 coiled-coil regions span residues 191-232 (LQAA…RDVE), 260-332 (ILQL…LQDT), 370-411 (VERL…AQSR), 461-722 (FAAL…AEAD), 758-960 (ARQM…AQAA), 1010-1030 (GEALREELRAVSEDLEALVRE), 1059-1086 (RASAEQLLRAKEAEAEDLRRVYEALAAE), 1129-1282 (INQY…LQAS), 1323-1494 (AKDQ…AERD), and 1523-1557 (AELASRRLRELQTQVDALEAEKAGLEEATQRTRAT). Residues 1592–1618 (GQGQVQGPAGTAPAAAAGAPGPQPGQA) are compositionally biased toward low complexity. The tract at residues 1592-1640 (GQGQVQGPAGTAPAAAAGAPGPQPGQAQAGGFGGAHGGGSISLSGGPRR) is disordered. The span at 1619–1631 (QAGGFGGAHGGGS) shows a compositional bias: gly residues.

This sequence belongs to the CEP135/TSGA10 family. In terms of assembly, homodimer.

It is found in the cytoplasm. The protein localises to the cytoskeleton. Its subcellular location is the microtubule organizing center. The protein resides in the centrosome. It localises to the centriole. Its function is as follows. Microtubule-binding protein essential for cytoskeletal organization (e.g. rootlet microtubule bundles) and flagellar basal body/centriole assembly. The polypeptide is Basal body protein 10 (Chlamydomonas reinhardtii (Chlamydomonas smithii)).